We begin with the raw amino-acid sequence, 470 residues long: Acetyl-CoA decarbonylase/synthase complex subunit gamma 1 (470 aa).

The 4Fe-4S domain occupies 1–60; that stretch reads MKINSPLEAYKYLPQTNCGECGQPTCMAFASTLIDRSGKTTDCPPLIKEKKFAKKLAELD. [4Fe-4S] cluster is bound by residues Cys-18, Cys-21, Cys-26, and Cys-43.

Heterodimer of delta and gamma chains. The ACDS complex is made up of alpha, epsilon, beta, gamma and delta chains with a probable stoichiometry of (alpha(2)epsilon(2))(4)-beta(8)-(gamma(1)delta(1))(8). The cofactor is corrinoid. [4Fe-4S] cluster serves as cofactor.

The catalysed reaction is 5,6,7,8-tetrahydrosarcinapterin + methyl-Co(III)-[corrinoid Fe-S protein] = 5-methyltetrahydrosarcinapterin + Co(I)-[corrinoid Fe-S protein] + H(+). Its pathway is one-carbon metabolism; methanogenesis from acetate. Functionally, part of a complex that catalyzes the reversible cleavage of acetyl-CoA, allowing growth on acetate as sole source of carbon and energy. The sequence is that of Acetyl-CoA decarbonylase/synthase complex subunit gamma 1 from Methanosarcina mazei (strain ATCC BAA-159 / DSM 3647 / Goe1 / Go1 / JCM 11833 / OCM 88) (Methanosarcina frisia).